Here is a 236-residue protein sequence, read N- to C-terminus: Pyridoxal 5'-phosphate synthase subunit PdxT (236 aa).

61–63 (GES) serves as a coordination point for L-glutamine. The active-site Nucleophile is cysteine 93. L-glutamine contacts are provided by residues arginine 127 and 163 to 164 (IR). Residues histidine 215 and glutamate 217 each act as charge relay system in the active site.

The protein belongs to the glutaminase PdxT/SNO family. In the presence of PdxS, forms a dodecamer of heterodimers. Only shows activity in the heterodimer.

It carries out the reaction aldehydo-D-ribose 5-phosphate + D-glyceraldehyde 3-phosphate + L-glutamine = pyridoxal 5'-phosphate + L-glutamate + phosphate + 3 H2O + H(+). The catalysed reaction is L-glutamine + H2O = L-glutamate + NH4(+). It functions in the pathway cofactor biosynthesis; pyridoxal 5'-phosphate biosynthesis. In terms of biological role, catalyzes the hydrolysis of glutamine to glutamate and ammonia as part of the biosynthesis of pyridoxal 5'-phosphate. The resulting ammonia molecule is channeled to the active site of PdxS. In Arthrobacter sp. (strain FB24), this protein is Pyridoxal 5'-phosphate synthase subunit PdxT.